A 504-amino-acid polypeptide reads, in one-letter code: Cytochrome P450 monooxygenase gsfF (504 aa).

Residues 1–16 form the signal peptide; sequence MTVLFILSAGLVAVFG. Residues Asn-97 and Asn-150 are each glycosylated (N-linked (GlcNAc...) asparagine). Cys-450 provides a ligand contact to heme.

It belongs to the cytochrome P450 family. Requires heme as cofactor.

It carries out the reaction griseophenone B + reduced [NADPH--hemoprotein reductase] + O2 + H(+) = desmethyl-dehydrogriseofulvin + oxidized [NADPH--hemoprotein reductase] + 2 H2O. It participates in secondary metabolite biosynthesis; terpenoid biosynthesis. Cytochrome P450 monooxygenase; part of the gene cluster that mediates the biosynthesis of griseofulvin, an important antifungal drug that has been in use for a long time for treating dermatophyte infections. The first step of the pathway is the formation of the heptaketide backbone by gsfA which is initiated by priming with acetyl-CoA, followed by sequential condensations of 6 malonyl-CoA units. The resulting benzophenone can undergo a spontaneous dehydration to form norlichexanthone. However, the true precursor for the griseofulvin biosynthesis is not norlichexanthone, but the heptaketide benzophenone that is O-methylated at 3-OH by gsfB to produce griseophenone D which is further methylated at 9-OH by gsfC to yield griseophenone C. Griseophenone C is then substrate of halogenase gsfI which is responsible for the regio-specific chlorination at the C13 position to form griseophenone B. The cytochrome P450 gsfF catalyzes the coupling of orcinol and phloroglucinol rings in griseophenone B to form desmethyl-dehydrogriseofulvin A which is further methylated at 5-OH by gsfD to yield dehydrogriseofulvin. Finally, gsfE performs stereospecific reduction of enone 18 of dehydrogriseofulvin to afford the final product griseofulvin. The chain is Cytochrome P450 monooxygenase gsfF from Penicillium aethiopicum.